The primary structure comprises 389 residues: Phospho-N-acetylmuramoyl-pentapeptide-transferase (389 aa).

Helical transmembrane passes span 25–45 (RAVM…PWVI), 73–93 (TMGG…WGDL), 97–117 (FIWI…VDDY), 135–155 (FWQS…VSEA), 190–210 (ISYP…IVGA), 222–242 (GLVI…AYVM), 258–278 (GAGE…AFLW), 286–306 (VFMG…VAVI), 311–331 (IVLF…MLQV), and 366–386 (QVVV…LSTL).

It belongs to the glycosyltransferase 4 family. MraY subfamily. Requires Mg(2+) as cofactor.

The protein localises to the cell inner membrane. The catalysed reaction is UDP-N-acetyl-alpha-D-muramoyl-L-alanyl-gamma-D-glutamyl-meso-2,6-diaminopimeloyl-D-alanyl-D-alanine + di-trans,octa-cis-undecaprenyl phosphate = di-trans,octa-cis-undecaprenyl diphospho-N-acetyl-alpha-D-muramoyl-L-alanyl-D-glutamyl-meso-2,6-diaminopimeloyl-D-alanyl-D-alanine + UMP. The protein operates within cell wall biogenesis; peptidoglycan biosynthesis. In terms of biological role, catalyzes the initial step of the lipid cycle reactions in the biosynthesis of the cell wall peptidoglycan: transfers peptidoglycan precursor phospho-MurNAc-pentapeptide from UDP-MurNAc-pentapeptide onto the lipid carrier undecaprenyl phosphate, yielding undecaprenyl-pyrophosphoryl-MurNAc-pentapeptide, known as lipid I. In Burkholderia pseudomallei (strain 1106a), this protein is Phospho-N-acetylmuramoyl-pentapeptide-transferase.